We begin with the raw amino-acid sequence, 273 residues long: Vitamin B12-binding protein (273 aa).

Positions 1–18 are cleaved as a signal peptide; it reads MMKTLSSLLLLFSVSLQA. A Fe/B12 periplasmic-binding domain is found at 23 to 273; the sequence is RVISLAPHAT…EHFASIEQKR (251 aa). Cys183 and Cys263 are joined by a disulfide.

Belongs to the BtuF family. The complex is composed of two ATP-binding proteins (BtuD), two transmembrane proteins (BtuC) and a solute-binding protein (BtuF).

The protein resides in the periplasm. Its function is as follows. Part of the ABC transporter complex BtuCDF involved in vitamin B12 import. Binds vitamin B12 and delivers it to the periplasmic surface of BtuC. The chain is Vitamin B12-binding protein from Vibrio vulnificus (strain CMCP6).